Reading from the N-terminus, the 388-residue chain is Lipid-A-disaccharide synthase (388 aa).

This sequence belongs to the LpxB family.

It carries out the reaction a lipid X + a UDP-2-N,3-O-bis[(3R)-3-hydroxyacyl]-alpha-D-glucosamine = a lipid A disaccharide + UDP + H(+). The protein operates within bacterial outer membrane biogenesis; LPS lipid A biosynthesis. Its function is as follows. Condensation of UDP-2,3-diacylglucosamine and 2,3-diacylglucosamine-1-phosphate to form lipid A disaccharide, a precursor of lipid A, a phosphorylated glycolipid that anchors the lipopolysaccharide to the outer membrane of the cell. The sequence is that of Lipid-A-disaccharide synthase from Burkholderia pseudomallei (strain 1710b).